The sequence spans 473 residues: Flavin-dependent L-tryptophan oxidase RebO (473 aa).

An N-terminal signal peptide occupies residues 1-21 (MSRGHKKITVLGAGVAGLVAA). FAD contacts are provided by residues 15-16 (VA), 35-36 (EG), Arg43, 61-64 (GAMR), Glu444, and 451-456 (AWIDGA).

The protein belongs to the flavin monoamine oxidase family. RebO subfamily. As to quaternary structure, homodimer. It depends on FAD as a cofactor.

The enzyme catalyses 7-chloro-L-tryptophan + O2 = 3-(7-chloroindol-3-yl)-2-iminopropanoate + H2O2. It catalyses the reaction L-tryptophan + O2 = 2-iminio-3-(indol-3-yl)propanoate + H2O2. Involved in the biosynthesis of the indolocarbazole antitumor agent rebeccamycin. It generates the imine form of 7-chloroindole 3-pyruvate (7Cl-IPA) from 7-chloro-L-tryptophan (7Cl-Trp), with concomitant two-electron reduction of O(2) to H(2)O(2). The enzyme is also active with L-tryptophan as substrate. The protein is Flavin-dependent L-tryptophan oxidase RebO (rebO) of Lentzea aerocolonigenes (Lechevalieria aerocolonigenes).